A 248-amino-acid chain; its full sequence is 14-3-3-like protein 1 (248 aa).

Belongs to the 14-3-3 family. As to quaternary structure, interacts with daf-16 and sir-2.1. Interacts with atgl-1. Interacts with hcf-1.

The protein localises to the cytoplasm. It is found in the nucleus. Functionally, required to modulate lifespan, in concert with hcf-1, acting redundantly with 14-3-3-like protein ftt-2. This chain is 14-3-3-like protein 1 (par-5), found in Caenorhabditis elegans.